Reading from the N-terminus, the 300-residue chain is ADP,ATP carrier protein 2 (300 aa).

Solcar repeat units follow at residues 8–100 (VAFI…YKQV), 113–203 (RYFI…ARGM), and 214–299 (VSWA…IKKV). Helical transmembrane passes span 10–39 (FIKDFAAGGISAAISKTAVAPIERVKLLLQ), 77–101 (LANVIRYFPTQALNFAFKDKYKQVF), 112–132 (TRYFIGNLASGGMAGATSLCF), 181–201 (VSVQGIIIYRAAYFGFYDTAR), and 213–233 (YVSWAIAQCVTTVAGIVSYPF). ADP is bound by residues arginine 82 and lysine 94. Arginine 237 is an ADP binding site. Positions 237–242 (RRRMMM) are important for transport activity. A Nucleotide carrier signature motif motif is present at residues 237-242 (RRRMMM). The helical transmembrane segment at 276–293 (AFSNVLRGTGGAFVLVLY) threads the bilayer.

This sequence belongs to the mitochondrial carrier (TC 2.A.29) family. Monomer.

It is found in the mitochondrion inner membrane. It carries out the reaction ADP(in) + ATP(out) = ADP(out) + ATP(in). Its activity is regulated as follows. The matrix-open state (m-state) is inhibited by the membrane-permeable bongkrekic acid (BKA). The cytoplasmic-open state (c-state) is inhibited by the membrane-impermeable toxic inhibitor carboxyatractyloside (CATR). Its function is as follows. ADP:ATP antiporter that mediates import of ADP into the mitochondrial matrix for ATP synthesis, and export of ATP out to fuel the cell. Cycles between the cytoplasmic-open state (c-state) and the matrix-open state (m-state): operates by the alternating access mechanism with a single substrate-binding site intermittently exposed to either the cytosolic (c-state) or matrix (m-state) side of the inner mitochondrial membrane. The sequence is that of ADP,ATP carrier protein 2 from Anopheles gambiae (African malaria mosquito).